The primary structure comprises 196 residues: SAGA-associated factor 11 homolog (196 aa).

The SGF11-type zinc finger occupies 102-123; the sequence is CTCPNCDRLVAAARFAPHLEKC. Residues 140-196 form a disordered region; it reads TKEGTSASSNSSYVHSGANAGGTDDEDDVDWSSDKRKKKSTQNSRNNGSKKNNGKTF. Residues 142–153 show a composition bias toward polar residues; that stretch reads EGTSASSNSSYV. Ser172 is subject to Phosphoserine. The span at 182 to 196 shows a compositional bias: low complexity; sequence NSRNNGSKKNNGKTF.

Belongs to the SGF11 family. In terms of assembly, component of some SAGA transcription coactivator-HAT complexes, at least composed of Ada2b, not/nonstop, Pcaf/Gcn5, Sgf11 and Spt3. Within the SAGA complex, Sgf11, e(y)2, and not/nonstop form an additional subcomplex of SAGA called the DUB module (deubiquitination module). Interacts directly with not/nonstop. Interacts with the AMEX complex component xmas-2. Interacts with Cbp80; important for promoter recruitment of Sgf11 that is not associated with the DUB module.

It localises to the nucleus. It is found in the nucleoplasm. Its subcellular location is the cytoplasm. Functionally, component of the transcription regulatory histone acetylation (HAT) complex SAGA, a multiprotein complex that activates transcription by remodeling chromatin and mediating histone acetylation and deubiquitination. Within the SAGA complex, participates in a subcomplex that specifically deubiquitinates histone H2B. The SAGA complex is recruited to specific gene promoters by activators, where it is required for transcription. Required for nuclear receptor-mediated transactivation. Binds independently on SAGA to promoters in an RNA-dependent manner. Binds to mRNA and is essential for total mRNA export from the nucleus. Required to counteract heterochromatin silencing. Controls the development of neuronal connectivity in visual system by being required for accurate axon targeting in the optic lobe. Required for expression of ecdysone-induced genes such as br/broad. This chain is SAGA-associated factor 11 homolog, found in Drosophila persimilis (Fruit fly).